The primary structure comprises 217 residues: Large ribosomal subunit protein uL1 (217 aa).

Y11 is subject to Phosphotyrosine. K91 and K106 each carry N6-acetyllysine. At K118 the chain carries N6-acetyllysine; alternate. A Glycyl lysine isopeptide (Lys-Gly) (interchain with G-Cter in SUMO1); alternate cross-link involves residue K118. A Glycyl lysine isopeptide (Lys-Gly) (interchain with G-Cter in SUMO2); alternate cross-link involves residue K118. A Glycyl lysine isopeptide (Lys-Gly) (interchain with G-Cter in SUMO2) cross-link involves residue K161.

Belongs to the universal ribosomal protein uL1 family. As to quaternary structure, component of the large ribosomal subunit.

It is found in the cytoplasm. Component of the large ribosomal subunit. The ribosome is a large ribonucleoprotein complex responsible for the synthesis of proteins in the cell. The chain is Large ribosomal subunit protein uL1 (RPL10A) from Oryctolagus cuniculus (Rabbit).